A 460-amino-acid polypeptide reads, in one-letter code: Bifunctional protein GlmU (460 aa).

A pyrophosphorylase region spans residues 1–229 (MTNYAIILAA…FNESLGVNDR (229 aa)). UDP-N-acetyl-alpha-D-glucosamine contacts are provided by residues 8–11 (LAAG), K22, Q72, and 77–78 (GT). D102 lines the Mg(2+) pocket. G139, E154, N169, and N227 together coordinate UDP-N-acetyl-alpha-D-glucosamine. N227 contributes to the Mg(2+) binding site. The segment at 230–250 (VALATAETVMRQRITQKHMVN) is linker. The interval 251–460 (GVTFHNPETV…RLAHHPSRSK (210 aa)) is N-acetyltransferase. 2 residues coordinate UDP-N-acetyl-alpha-D-glucosamine: R332 and K350. The active-site Proton acceptor is the H362. UDP-N-acetyl-alpha-D-glucosamine is bound by residues Y365 and N376. Residues A379, 385 to 386 (NY), S404, A422, and R439 each bind acetyl-CoA.

This sequence in the N-terminal section; belongs to the N-acetylglucosamine-1-phosphate uridyltransferase family. The protein in the C-terminal section; belongs to the transferase hexapeptide repeat family. As to quaternary structure, homotrimer. The cofactor is Mg(2+).

It localises to the cytoplasm. The catalysed reaction is alpha-D-glucosamine 1-phosphate + acetyl-CoA = N-acetyl-alpha-D-glucosamine 1-phosphate + CoA + H(+). It catalyses the reaction N-acetyl-alpha-D-glucosamine 1-phosphate + UTP + H(+) = UDP-N-acetyl-alpha-D-glucosamine + diphosphate. Its pathway is nucleotide-sugar biosynthesis; UDP-N-acetyl-alpha-D-glucosamine biosynthesis; N-acetyl-alpha-D-glucosamine 1-phosphate from alpha-D-glucosamine 6-phosphate (route II): step 2/2. It participates in nucleotide-sugar biosynthesis; UDP-N-acetyl-alpha-D-glucosamine biosynthesis; UDP-N-acetyl-alpha-D-glucosamine from N-acetyl-alpha-D-glucosamine 1-phosphate: step 1/1. It functions in the pathway bacterial outer membrane biogenesis; LPS lipid A biosynthesis. Its function is as follows. Catalyzes the last two sequential reactions in the de novo biosynthetic pathway for UDP-N-acetylglucosamine (UDP-GlcNAc). The C-terminal domain catalyzes the transfer of acetyl group from acetyl coenzyme A to glucosamine-1-phosphate (GlcN-1-P) to produce N-acetylglucosamine-1-phosphate (GlcNAc-1-P), which is converted into UDP-GlcNAc by the transfer of uridine 5-monophosphate (from uridine 5-triphosphate), a reaction catalyzed by the N-terminal domain. This chain is Bifunctional protein GlmU, found in Streptococcus pyogenes serotype M3 (strain ATCC BAA-595 / MGAS315).